A 95-amino-acid chain; its full sequence is Co-chaperonin GroES (95 aa).

Belongs to the GroES chaperonin family. In terms of assembly, heptamer of 7 subunits arranged in a ring. Interacts with the chaperonin GroEL.

The protein localises to the cytoplasm. Together with the chaperonin GroEL, plays an essential role in assisting protein folding. The GroEL-GroES system forms a nano-cage that allows encapsulation of the non-native substrate proteins and provides a physical environment optimized to promote and accelerate protein folding. GroES binds to the apical surface of the GroEL ring, thereby capping the opening of the GroEL channel. The chain is Co-chaperonin GroES from Lachnoclostridium phytofermentans (strain ATCC 700394 / DSM 18823 / ISDg) (Clostridium phytofermentans).